We begin with the raw amino-acid sequence, 527 residues long: G patch domain-containing protein 2 (527 aa).

Residues 35-135 (LEESSEQARG…RPSSNLSSSV (101 aa)) form a disordered region. Positions 62–76 (RQARKRRGRKRRSYN) are enriched in basic residues. The span at 97–116 (EPSKDYREKHSNNKKDRSDS) shows a compositional bias: basic and acidic residues. A phosphoserine mark is found at Ser-114, Ser-116, and Ser-145. 3 disordered regions span residues 175-281 (SSKR…GDDE), 350-375 (TPSKNIKKSSGAPPSMLSAPGPGSNK), and 480-527 (TPGS…GNPA). Residues 186-196 (GCRDQDMDNDR) are compositionally biased toward basic and acidic residues. Residues 206-215 (KKVKKRKLKG) show a composition bias toward basic residues. The segment covering 231-257 (SEERSQPNKDRMEYEEQKASDELRSES) has biased composition (basic and acidic residues). The G-patch domain maps to 466 to 512 (ESNIGNRMLQSMGWTPGSGLGRDGRGIAEPVQAVQRPKGLGLGFPLP). Over residues 510–527 (PLPKSSPTSPAPTSGNPA) the composition is skewed to low complexity.

As to quaternary structure, interacts with DHX15.

The protein localises to the nucleus speckle. The protein resides in the nucleus. Its subcellular location is the nucleolus. Functionally, enhances the ATPase activity of DHX15 in vitro. The chain is G patch domain-containing protein 2 (Gpatch2) from Mus musculus (Mouse).